Reading from the N-terminus, the 155-residue chain is MRRKAASKRLTLTDQRFNDEIIYRLINAVMIDGKKSVATKVVYDAMDIVGEKSEESALDVFHKAMTNISPVVEVRGKRVGGATYQIPMEVRAERRVALALRWLKKYSESRSGKSMATRLAAEILDASNSQGSAVKKREEVHKMAEANKAFSHFRF.

This sequence belongs to the universal ribosomal protein uS7 family. Part of the 30S ribosomal subunit. Contacts proteins S9 and S11.

Functionally, one of the primary rRNA binding proteins, it binds directly to 16S rRNA where it nucleates assembly of the head domain of the 30S subunit. Is located at the subunit interface close to the decoding center, probably blocks exit of the E-site tRNA. In Chloroherpeton thalassium (strain ATCC 35110 / GB-78), this protein is Small ribosomal subunit protein uS7.